The sequence spans 968 residues: RNA polymerase-associated protein RapA (968 aa).

The Helicase ATP-binding domain occupies 164–334 (DVGRRHAPRV…FARLRLLDPN (171 aa)). 177 to 184 (DEVGLGKT) contacts ATP. Positions 280–283 (DEAH) match the DEAH box motif. The 155-residue stretch at 490 to 644 (RVEWLMGYLT…TCPTGRTVYD (155 aa)) folds into the Helicase C-terminal domain.

The protein belongs to the SNF2/RAD54 helicase family. RapA subfamily. As to quaternary structure, interacts with the RNAP. Has a higher affinity for the core RNAP than for the holoenzyme. Its ATPase activity is stimulated by binding to RNAP.

Its function is as follows. Transcription regulator that activates transcription by stimulating RNA polymerase (RNAP) recycling in case of stress conditions such as supercoiled DNA or high salt concentrations. Probably acts by releasing the RNAP, when it is trapped or immobilized on tightly supercoiled DNA. Does not activate transcription on linear DNA. Probably not involved in DNA repair. The sequence is that of RNA polymerase-associated protein RapA from Klebsiella pneumoniae subsp. pneumoniae (strain ATCC 700721 / MGH 78578).